A 317-amino-acid chain; its full sequence is Osteopontin (317 aa).

The first 16 residues, 1–16 (MRLAVVCFCLFGLASC), serve as a signal peptide directing secretion. A phosphoserine mark is found at Ser-26, Ser-27, Ser-60, Ser-62, and Ser-63. Residues 43–297 (WLKPDPSQKQ…LVLDPKSKED (255 aa)) form a disordered region. Residues 49–63 (SQKQNLLAPQNSVSS) show a composition bias toward polar residues. Position 66 is a phosphothreonine (Thr-66). Residues Ser-76, Ser-78, Ser-81, Ser-106, Ser-109, Ser-112, Ser-115, and Ser-118 each carry the phosphoserine modification. The segment covering 86–110 (DDDDDDDDDGDHAESEDSVNSDESD) has biased composition (acidic residues). 3 O-linked (GalNAc...) threonine glycosylation sites follow: Thr-123, Thr-132, and Thr-137. A Cell attachment site motif is present at residues 144–146 (RGD). 2 positions are modified to phosphothreonine: Thr-170 and Thr-175. Basic and acidic residues predominate over residues 174–187 (LTSRMKSQESDEAI). 7 positions are modified to phosphoserine: Ser-176, Ser-180, Ser-200, Ser-204, Ser-209, Ser-213, and Ser-219. Residues 197-216 (SVPSDQDSNGKTSHESSQLD) show a composition bias toward polar residues. A glycan (O-linked (Xyl...) (chondroitin sulfate) serine) is linked at Ser-219. Thr-222 carries the phosphothreonine modification. Composition is skewed to basic and acidic residues over residues 223 to 240 (HSLE…HEST) and 248 to 263 (SAEK…RSDA). A phosphoserine mark is found at Ser-224, Ser-228, Ser-257, Ser-261, Ser-266, Ser-270, Ser-273, Ser-278, Ser-283, Ser-294, Ser-306, Ser-311, Ser-313, and Ser-314. Over residues 273-297 (SLEHQSHEFHSHEDKLVLDPKSKED) the composition is skewed to basic and acidic residues. Residue Ser-311 is glycosylated (O-linked (Xyl...) (chondroitin sulfate) serine).

The protein belongs to the osteopontin family. Interacts (via N-terminus) with integrin ITGA9:ITGB1. In terms of processing, extensively phosphorylated by FAM20C in the extracellular medium at multiple sites within the S-x-E/pS motif. The phosphorylated form inhibits hydroxyapatite crystallization. Dephosphorylation via a mechanism involving ALPL/TNAP promotes hydroxyapatite crystallization. Post-translationally, O-glycosylated. Forms covalent cross-links mediated by transglutaminase TGM2, between a glutamine and the epsilon-amino group of a lysine residue, forming homopolymers and heteropolymers, increasing its collagen binding properties.

The protein resides in the secreted. Major non-collagenous bone protein that binds tightly to hydroxyapatite. Appears to form an integral part of the mineralized matrix. Probably important to cell-matrix interaction. Its function is as follows. Acts as a cytokine involved in enhancing production of interferon-gamma and interleukin-12 and reducing production of interleukin-10 and is essential in the pathway that leads to type I immunity. The protein is Osteopontin (Spp1) of Rattus norvegicus (Rat).